Reading from the N-terminus, the 724-residue chain is Phosphoribosylformylglycinamidine synthase subunit PurL (724 aa).

H34 is an active-site residue. Y37 serves as a coordination point for ATP. Residue E78 coordinates Mg(2+). Residues 79–82 (SHNH) and R101 each bind substrate. The Proton acceptor role is filled by H80. Position 102 (D102) interacts with Mg(2+). Residue Q226 coordinates substrate. A Mg(2+)-binding site is contributed by D254. 298–300 (ESQ) serves as a coordination point for substrate. Positions 480 and 517 each coordinate ATP. A Mg(2+)-binding site is contributed by N518. Position 520 (S520) interacts with substrate.

The protein belongs to the FGAMS family. In terms of assembly, monomer. Part of the FGAM synthase complex composed of 1 PurL, 1 PurQ and 2 PurS subunits.

The protein localises to the cytoplasm. The enzyme catalyses N(2)-formyl-N(1)-(5-phospho-beta-D-ribosyl)glycinamide + L-glutamine + ATP + H2O = 2-formamido-N(1)-(5-O-phospho-beta-D-ribosyl)acetamidine + L-glutamate + ADP + phosphate + H(+). Its pathway is purine metabolism; IMP biosynthesis via de novo pathway; 5-amino-1-(5-phospho-D-ribosyl)imidazole from N(2)-formyl-N(1)-(5-phospho-D-ribosyl)glycinamide: step 1/2. Part of the phosphoribosylformylglycinamidine synthase complex involved in the purines biosynthetic pathway. Catalyzes the ATP-dependent conversion of formylglycinamide ribonucleotide (FGAR) and glutamine to yield formylglycinamidine ribonucleotide (FGAM) and glutamate. The FGAM synthase complex is composed of three subunits. PurQ produces an ammonia molecule by converting glutamine to glutamate. PurL transfers the ammonia molecule to FGAR to form FGAM in an ATP-dependent manner. PurS interacts with PurQ and PurL and is thought to assist in the transfer of the ammonia molecule from PurQ to PurL. This chain is Phosphoribosylformylglycinamidine synthase subunit PurL, found in Methanopyrus kandleri (strain AV19 / DSM 6324 / JCM 9639 / NBRC 100938).